The chain runs to 251 residues: Probable aquaporin TIP4-1 (251 aa).

2 helical membrane-spanning segments follow: residues 26–46 and 57–77; these read LVLT…AGVP and ALAG…TAGF. The NPA 1 signature appears at 85-87; sequence NPA. The next 3 helical transmembrane spans lie at 104-124, 144-164, and 170-190; these read ALYV…LRYL, GLVM…ATIL, and VPGF…IAGG. The NPA 2 signature appears at 198–200; the sequence is NPA. Residues 219-239 form a helical membrane-spanning segment; it reads WLGPLIGGPLAGLVYESLFLV.

Belongs to the MIP/aquaporin (TC 1.A.8) family. TIP (TC 1.A.8.10) subfamily. In terms of tissue distribution, expressed in roots, leaves and anthers.

Its subcellular location is the vacuole membrane. In terms of biological role, aquaporins facilitate the transport of water and small neutral solutes across cell membranes. May be involved in transport from the vacuolar compartment to the cytoplasm. The chain is Probable aquaporin TIP4-1 (TIP4-1) from Oryza sativa subsp. japonica (Rice).